We begin with the raw amino-acid sequence, 265 residues long: MDYINAAILGVIEGITEFLPISSTGHLIIAEQWLGHRSDMFNIVIQAGAILAVTIIYWRRLLDLVLGWREPENRDYAAKLIVAFLITAILGLVVKKLGFELPETATPIAWALIIGGIWMIFAEWAAARRPPHKQITWLVAILVGIAQIVAGVFPGTSRSGATIFVALLAGTGNRAAATEFAFLVGIPTMYAASGYELLKTFKDGGAAGEDWTALAIAFVVSTIVAFIAVKWLLAYIRSNRFTLFAIYRIILGVLLLGMTATGMIA.

7 helical membrane passes run 38–58 (SDMF…IIYW), 80–100 (LIVA…LGFE), 107–127 (PIAW…WAAA), 135–155 (ITWL…VFPG), 175–195 (AAAT…ASGY), 213–233 (ALAI…KWLL), and 244–264 (FAIY…TGMI).

Belongs to the UppP family.

It is found in the cell inner membrane. It catalyses the reaction di-trans,octa-cis-undecaprenyl diphosphate + H2O = di-trans,octa-cis-undecaprenyl phosphate + phosphate + H(+). Catalyzes the dephosphorylation of undecaprenyl diphosphate (UPP). Confers resistance to bacitracin. The polypeptide is Undecaprenyl-diphosphatase (Rhizobium etli (strain ATCC 51251 / DSM 11541 / JCM 21823 / NBRC 15573 / CFN 42)).